The sequence spans 489 residues: Betaine aldehyde dehydrogenase (489 aa).

K(+) is bound by residues threonine 26 and aspartate 93. An NAD(+)-binding site is contributed by 150-152 (GAW). Lysine 162 serves as the catalytic Charge relay system. Residue 176–179 (KPSE) participates in NAD(+) binding. Isoleucine 180 serves as a coordination point for K(+). 229 to 232 (GVET) is an NAD(+) binding site. A K(+)-binding site is contributed by leucine 245. Glutamate 251 (proton acceptor) is an active-site residue. NAD(+) contacts are provided by glycine 253, cysteine 285, and glutamate 386. Cysteine 285 (nucleophile) is an active-site residue. The residue at position 285 (cysteine 285) is a Cysteine sulfenic acid (-SOH). Lysine 456 and glycine 459 together coordinate K(+). Glutamate 463 serves as the catalytic Charge relay system.

This sequence belongs to the aldehyde dehydrogenase family. Dimer of dimers. Requires K(+) as cofactor.

The catalysed reaction is betaine aldehyde + NAD(+) + H2O = glycine betaine + NADH + 2 H(+). It participates in amine and polyamine biosynthesis; betaine biosynthesis via choline pathway; betaine from betaine aldehyde: step 1/1. Its function is as follows. Involved in the biosynthesis of the osmoprotectant glycine betaine. Catalyzes the irreversible oxidation of betaine aldehyde to the corresponding acid. The polypeptide is Betaine aldehyde dehydrogenase (Paraburkholderia phytofirmans (strain DSM 17436 / LMG 22146 / PsJN) (Burkholderia phytofirmans)).